The sequence spans 163 residues: Nucleotide-binding protein Asuc_2113 (163 aa).

Belongs to the YajQ family.

Nucleotide-binding protein. This chain is Nucleotide-binding protein Asuc_2113, found in Actinobacillus succinogenes (strain ATCC 55618 / DSM 22257 / CCUG 43843 / 130Z).